The primary structure comprises 285 residues: Tryptophan synthase alpha chain (285 aa).

Residues Glu53 and Asp64 each act as proton acceptor in the active site.

Belongs to the TrpA family. As to quaternary structure, tetramer of two alpha and two beta chains.

It catalyses the reaction (1S,2R)-1-C-(indol-3-yl)glycerol 3-phosphate + L-serine = D-glyceraldehyde 3-phosphate + L-tryptophan + H2O. It functions in the pathway amino-acid biosynthesis; L-tryptophan biosynthesis; L-tryptophan from chorismate: step 5/5. Its function is as follows. The alpha subunit is responsible for the aldol cleavage of indoleglycerol phosphate to indole and glyceraldehyde 3-phosphate. The chain is Tryptophan synthase alpha chain from Bordetella pertussis (strain Tohama I / ATCC BAA-589 / NCTC 13251).